Here is a 183-residue protein sequence, read N- to C-terminus: Nascent polypeptide-associated complex subunit beta (183 aa).

Residues 62 to 127 enclose the NAC-A/B domain; it reads GADDKKLQTT…GEEKELTELV (66 aa). Residues 150-183 form a disordered region; sequence QNMQKQAGTEGKKDEDEDDIPDLVEGENFESNVE. Positions 164-183 are enriched in acidic residues; the sequence is EDEDDIPDLVEGENFESNVE.

It belongs to the NAC-beta family. Part of the nascent polypeptide-associated complex (NAC), consisting of egd2 and egd1. NAC associates with ribosomes via egd1.

The protein resides in the cytoplasm. It is found in the nucleus. Functionally, component of the nascent polypeptide-associated complex (NAC), a dynamic component of the ribosomal exit tunnel, protecting the emerging polypeptides from interaction with other cytoplasmic proteins to ensure appropriate nascent protein targeting. The NAC complex also promotes mitochondrial protein import by enhancing productive ribosome interactions with the outer mitochondrial membrane and blocks the inappropriate interaction of ribosomes translating non-secretory nascent polypeptides with translocation sites in the membrane of the endoplasmic reticulum. EGD1 may act as a transcription factor that exert a negative effect on the expression of several genes that are transcribed by RNA polymerase II. In Neosartorya fischeri (strain ATCC 1020 / DSM 3700 / CBS 544.65 / FGSC A1164 / JCM 1740 / NRRL 181 / WB 181) (Aspergillus fischerianus), this protein is Nascent polypeptide-associated complex subunit beta (egd1).